The sequence spans 343 residues: Aspartate-semialdehyde dehydrogenase (343 aa).

NADP(+) is bound by residues 13–16 and 41–42; these read TGAV and KS. Residue arginine 103 participates in phosphate binding. Residue cysteine 134 is the Acyl-thioester intermediate of the active site. Residue glutamine 161 participates in substrate binding. 164–165 is a binding site for NADP(+); sequence SG. Lysine 220 is a phosphate binding site. Arginine 241 lines the substrate pocket. Histidine 248 functions as the Proton acceptor in the catalytic mechanism. NADP(+) is bound at residue glutamine 321.

This sequence belongs to the aspartate-semialdehyde dehydrogenase family. As to quaternary structure, homodimer.

It catalyses the reaction L-aspartate 4-semialdehyde + phosphate + NADP(+) = 4-phospho-L-aspartate + NADPH + H(+). Its pathway is amino-acid biosynthesis; L-lysine biosynthesis via DAP pathway; (S)-tetrahydrodipicolinate from L-aspartate: step 2/4. The protein operates within amino-acid biosynthesis; L-methionine biosynthesis via de novo pathway; L-homoserine from L-aspartate: step 2/3. It participates in amino-acid biosynthesis; L-threonine biosynthesis; L-threonine from L-aspartate: step 2/5. In terms of biological role, catalyzes the NADPH-dependent formation of L-aspartate-semialdehyde (L-ASA) by the reductive dephosphorylation of L-aspartyl-4-phosphate. The sequence is that of Aspartate-semialdehyde dehydrogenase from Campylobacter jejuni subsp. jejuni serotype O:2 (strain ATCC 700819 / NCTC 11168).